The following is a 297-amino-acid chain: Mitochondrial nicotinamide adenine dinucleotide transporter SLC25A52 (297 aa).

Solcar repeat units lie at residues 28-108 (VGEM…LSCL), 116-200 (PEFA…IKEH), and 209-296 (AHLV…LLKF). 6 consecutive transmembrane segments (helical) span residues 34–51 (YLCG…TYPI), 85–105 (LPPL…YEDL), 118–138 (FATH…FTPL), 179–199 (ILFR…PIKE), 215–235 (FIGG…INVV), and 268–289 (LFRG…INAT).

The protein belongs to the mitochondrial carrier (TC 2.A.29) family.

It is found in the mitochondrion inner membrane. The catalysed reaction is NAD(+)(in) = NAD(+)(out). Functionally, mitochondrial membrane carrier protein that mediates the import of NAD(+) into mitochondria. Compared to SLC25A51, SLC25A52-mediated transport is not essential for the import of NAD(+) in mitochondria. The transport mechanism, uniport or antiport, its electrogenicity and substrate selectivity, remain to be elucidated. In Homo sapiens (Human), this protein is Mitochondrial nicotinamide adenine dinucleotide transporter SLC25A52.